Here is a 682-residue protein sequence, read N- to C-terminus: Methionine--tRNA ligase (682 aa).

Residues 14–24 carry the 'HIGH' region motif; that stretch reads PYANGSIHLGH. The Zn(2+) site is built by C145, C148, C158, and C161. The short motif at 331–335 is the 'KMSKS' region element; it reads KMSKS. Position 334 (K334) interacts with ATP. The tRNA-binding domain occupies 580–682; sequence AFAAVDLRVA…SGAKPGQRIK (103 aa).

The protein belongs to the class-I aminoacyl-tRNA synthetase family. MetG type 1 subfamily. In terms of assembly, homodimer. The cofactor is Zn(2+).

The protein resides in the cytoplasm. The catalysed reaction is tRNA(Met) + L-methionine + ATP = L-methionyl-tRNA(Met) + AMP + diphosphate. Functionally, is required not only for elongation of protein synthesis but also for the initiation of all mRNA translation through initiator tRNA(fMet) aminoacylation. The polypeptide is Methionine--tRNA ligase (Pseudomonas savastanoi pv. phaseolicola (strain 1448A / Race 6) (Pseudomonas syringae pv. phaseolicola (strain 1448A / Race 6))).